We begin with the raw amino-acid sequence, 116 residues long: Large ribosomal subunit protein bL17 (116 aa).

This sequence belongs to the bacterial ribosomal protein bL17 family. As to quaternary structure, part of the 50S ribosomal subunit. Contacts protein L32.

This chain is Large ribosomal subunit protein bL17, found in Prochlorococcus marinus (strain MIT 9312).